Consider the following 212-residue polypeptide: DNA-directed RNA polymerase III subunit RPC8 (212 aa).

Residue Ser162 is modified to Phosphoserine. The segment covering 166–184 has biased composition (basic and acidic residues); sequence RELEERAQLENEIEGKNEE. The interval 166-194 is disordered; the sequence is RELEERAQLENEIEGKNEETPQNEKPPAY.

It belongs to the eukaryotic RPB7/RPC8 RNA polymerase subunit family. Component of the RNA polymerase III (Pol III) complex consisting of 17 subunits. RPC25/RPC8 and RPC17/RPC9 form a Pol III subcomplex.

It localises to the nucleus. DNA-dependent RNA polymerase catalyzes the transcription of DNA into RNA using the four ribonucleoside triphosphates as substrates. Specific peripheric component of RNA polymerase III which synthesizes small RNAs, such as 5S rRNA and tRNA. The RPC25/RPC8-RPC17/RPC9 subcomplex may bind Pol III transcripts emerging from the adjacent exit pore during elongation. This is DNA-directed RNA polymerase III subunit RPC8 (RPC25) from Saccharomyces cerevisiae (strain ATCC 204508 / S288c) (Baker's yeast).